The primary structure comprises 448 residues: C4-dicarboxylate transport protein (448 aa).

The next 7 helical transmembrane spans lie at 22-42 (FQVV…PAFA), 55-75 (LVKM…IAGM), 90-110 (TYFL…AHVV), 137-157 (ELSL…SAFV), 159-179 (GNIL…ALVG), 199-219 (LVHM…AFTI), and 232-252 (WLVG…LGIV). The disordered stretch occupies residues 428–448 (RAPPLQAPVPPPDAVAPVSAR). Pro residues predominate over residues 432–441 (LQAPVPPPDA).

It belongs to the dicarboxylate/amino acid:cation symporter (DAACS) (TC 2.A.23) family.

It is found in the cell inner membrane. Its function is as follows. Responsible for the transport of dicarboxylates such as succinate, fumarate, and malate from the periplasm across the membrane. The protein is C4-dicarboxylate transport protein of Xanthomonas campestris pv. campestris (strain 8004).